We begin with the raw amino-acid sequence, 103 residues long: MYAVFQSGGKQHRVSEGQTVRLEKLDIATGETIEFAEVLMIANGEEVKIGIPFVDGGVIKAEVVAHGRGEKVKIVKFRRRKHYRKQQGHRQWFTDVKITGISA.

The protein belongs to the bacterial ribosomal protein bL21 family. As to quaternary structure, part of the 50S ribosomal subunit. Contacts protein L20.

Functionally, this protein binds to 23S rRNA in the presence of protein L20. In Salmonella paratyphi A (strain ATCC 9150 / SARB42), this protein is Large ribosomal subunit protein bL21.